Consider the following 669-residue polypeptide: MSKEIAKKRIEELRDLLNTFNYQYHVLDNPSVSDAEYDRNMQELIKLEAENPEFMSEDSPSVRVGGTVLDIFEKVTHKSPMLSLGNAFNEGDLRDFDRRVRQGIDGANVRYICELKIDGLAVSLHYEKGRFIQGATRGDGVTGEDITQNLKTIKAIPLRLNEEVTLEARGEAYMPKRSFVKLNEEKEQNGEDVFANPRNAAAGSIRQLDPKIAAKRNLSMFVYGLANVEEKTIPSHSESLDFLGELGFKTNPNRRTCETIEEVIAYVEEWQEKRPHLDYEIDGIVIKVDDVALQESLGTTAKSPRWAIAYKFPAEEVVTRLTGIELSVGRTGVVTPTAELEPVRVAGTIVRRASLHNEDLIREKDIRIGDYVVVKKAGDIIPEVVNVIFDKRTGEEEEYRMPTHCPACESELVRLEEEVALRCINPTCPAQIREGLIHFVSRNAMNIDGLGERVITQLFDADYIRTFADLYALTKEQLLQLERFGEKSATNLIQAIENSKENSLERLLFGLGIRHVGAKAARTFAEHFETMDELVKATEEELKAINEIGEKMAQSVVTYFDNEDVLELLQQFKEYGVNMKYKGIKIADLQNVESYFAGKTVVLTGKLEVMGRSEAKKKIEALGGKVTGSVSKSTDLVVAGEAAGSKLAQAEKHNVEVWNEERFLQELNK.

Residues 34–38 (DAEYD), 83–84 (SL), and E114 contribute to the NAD(+) site. K116 acts as the N6-AMP-lysine intermediate in catalysis. The NAD(+) site is built by R137, E171, K287, and K311. The Zn(2+) site is built by C405, C408, C423, and C428. The region spanning 591–669 (NVESYFAGKT…EERFLQELNK (79 aa)) is the BRCT domain.

Belongs to the NAD-dependent DNA ligase family. LigA subfamily. Mg(2+) is required as a cofactor. Requires Mn(2+) as cofactor.

The enzyme catalyses NAD(+) + (deoxyribonucleotide)n-3'-hydroxyl + 5'-phospho-(deoxyribonucleotide)m = (deoxyribonucleotide)n+m + AMP + beta-nicotinamide D-nucleotide.. DNA ligase that catalyzes the formation of phosphodiester linkages between 5'-phosphoryl and 3'-hydroxyl groups in double-stranded DNA using NAD as a coenzyme and as the energy source for the reaction. It is essential for DNA replication and repair of damaged DNA. In Bacillus cereus (strain B4264), this protein is DNA ligase.